The following is a 457-amino-acid chain: Ribosomal protein uS12 methylthiotransferase RimO (457 aa).

The MTTase N-terminal domain occupies 9-128; that stretch reads KKVHFISLGC…ILKNSDEGEK (120 aa). [4Fe-4S] cluster-binding residues include Cys18, Cys54, Cys88, Cys163, Cys167, and Cys170. The Radical SAM core domain occupies 149–384; the sequence is SQPGHRAYLK…MEVQQNISRE (236 aa). The TRAM domain occupies 387–455; the sequence is SDFVGKTLQV…EYDLIGEIVV (69 aa).

Belongs to the methylthiotransferase family. RimO subfamily. [4Fe-4S] cluster is required as a cofactor.

The protein resides in the cytoplasm. The enzyme catalyses L-aspartate(89)-[ribosomal protein uS12]-hydrogen + (sulfur carrier)-SH + AH2 + 2 S-adenosyl-L-methionine = 3-methylsulfanyl-L-aspartate(89)-[ribosomal protein uS12]-hydrogen + (sulfur carrier)-H + 5'-deoxyadenosine + L-methionine + A + S-adenosyl-L-homocysteine + 2 H(+). In terms of biological role, catalyzes the methylthiolation of an aspartic acid residue of ribosomal protein uS12. The polypeptide is Ribosomal protein uS12 methylthiotransferase RimO (Bdellovibrio bacteriovorus (strain ATCC 15356 / DSM 50701 / NCIMB 9529 / HD100)).